The following is an 836-amino-acid chain: Protein translocase subunit SecA (836 aa).

ATP-binding positions include Gln85, 103-107 (GEGKT), and Asp492. Residues Cys820, Cys822, Cys831, and Cys832 each coordinate Zn(2+).

This sequence belongs to the SecA family. As to quaternary structure, monomer and homodimer. Part of the essential Sec protein translocation apparatus which comprises SecA, SecYEG and auxiliary proteins SecDF. Other proteins may also be involved. It depends on Zn(2+) as a cofactor.

Its subcellular location is the cell membrane. The protein localises to the cytoplasm. The enzyme catalyses ATP + H2O + cellular proteinSide 1 = ADP + phosphate + cellular proteinSide 2.. Its function is as follows. Part of the Sec protein translocase complex. Interacts with the SecYEG preprotein conducting channel. Has a central role in coupling the hydrolysis of ATP to the transfer of proteins into and across the cell membrane, serving as an ATP-driven molecular motor driving the stepwise translocation of polypeptide chains across the membrane. The chain is Protein translocase subunit SecA from Clostridium botulinum (strain Eklund 17B / Type B).